The sequence spans 466 residues: UDP-N-acetylmuramate--L-alanine ligase (466 aa).

Gly-119 to Thr-125 is a binding site for ATP.

This sequence belongs to the MurCDEF family.

The protein resides in the cytoplasm. It carries out the reaction UDP-N-acetyl-alpha-D-muramate + L-alanine + ATP = UDP-N-acetyl-alpha-D-muramoyl-L-alanine + ADP + phosphate + H(+). Its pathway is cell wall biogenesis; peptidoglycan biosynthesis. In terms of biological role, cell wall formation. The protein is UDP-N-acetylmuramate--L-alanine ligase of Cytophaga hutchinsonii (strain ATCC 33406 / DSM 1761 / CIP 103989 / NBRC 15051 / NCIMB 9469 / D465).